Here is a 274-residue protein sequence, read N- to C-terminus: Proto-oncogene FRAT1 (274 aa).

4 disordered regions span residues 1-24, 55-107, 132-194, and 232-274; these read MPCR…DDSF, AHDR…PGAV, GASA…DDPH, and GPLS…VPGS. Acidic residues predominate over residues 7–23; it reads EEEEAGDEAEGEEDDDS. The tract at residues 191 to 214 is involved in GSK-3 binding; the sequence is DDPHRLLQQLVLSGNLIKEAVRRL. A phosphoserine mark is found at Ser-243 and Ser-246.

It belongs to the GSK-3-binding protein family. Binds DVL1. Binds GSK-3 and prevent GSK-3-dependent phosphorylation. Post-translationally, phosphorylated. As to expression, highly expressed in testis. Lower level of expression in spleen, thymus and brain.

Its subcellular location is the cytoplasm. Its function is as follows. Positively regulates the Wnt signaling pathway by stabilizing beta-catenin through the association with GSK-3. May play a role in tumor progression and collaborate with PIM1 and MYC in lymphomagenesis. The protein is Proto-oncogene FRAT1 (Frat1) of Mus musculus (Mouse).